A 1220-amino-acid polypeptide reads, in one-letter code: ATP-dependent helicase/nuclease subunit A (1220 aa).

The 465-residue stretch at 9–473 folds into the UvrD-like helicase ATP-binding domain; that stretch reads VIWTDDQWKS…IDLSQNFRSR (465 aa). 30 to 37 is a binding site for ATP; the sequence is AAAGSGKT. The UvrD-like helicase C-terminal domain occupies 474 to 782; it reads PEVLSTTNYL…RMMTIHASKG (309 aa).

This sequence belongs to the helicase family. AddA subfamily. Heterodimer of AddA and AddB/RexB. Requires Mg(2+) as cofactor.

It catalyses the reaction Couples ATP hydrolysis with the unwinding of duplex DNA by translocating in the 3'-5' direction.. The enzyme catalyses ATP + H2O = ADP + phosphate + H(+). The heterodimer acts as both an ATP-dependent DNA helicase and an ATP-dependent, dual-direction single-stranded exonuclease. Recognizes the chi site generating a DNA molecule suitable for the initiation of homologous recombination. The AddA nuclease domain is required for chi fragment generation; this subunit has the helicase and 3' -&gt; 5' nuclease activities. The protein is ATP-dependent helicase/nuclease subunit A of Staphylococcus carnosus (strain TM300).